The sequence spans 304 residues: Putative S-adenosyl-L-methionine-dependent methyltransferase MAP_4189c (304 aa).

S-adenosyl-L-methionine is bound by residues Asp130 and 159-160; that span reads DL.

This sequence belongs to the UPF0677 family.

Its function is as follows. Exhibits S-adenosyl-L-methionine-dependent methyltransferase activity. This Mycolicibacterium paratuberculosis (strain ATCC BAA-968 / K-10) (Mycobacterium paratuberculosis) protein is Putative S-adenosyl-L-methionine-dependent methyltransferase MAP_4189c.